Here is a 371-residue protein sequence, read N- to C-terminus: Protein maelstrom 1 (371 aa).

A DNA-binding region (HMG box) is located at residues 2–68 (AQNKPNAFMA…VLERESKTER (67 aa)).

The protein belongs to the maelstrom family.

Its subcellular location is the cytoplasm. The protein localises to the nucleus. In terms of biological role, involved both in the piRNA and miRNA metabolic processes. As a component of the meiotic nuage, plays a central role during oogenesis by repressing transposable elements and preventing their mobilization, which is essential for the germline integrity. Repression of transposable elements is mediated via the piRNA metabolic process, which mediates the repression of transposable elements during meiosis by forming complexes composed of piRNAs and Piwi proteins and governs the repression of transposons. As a nuclear component, it is required for proper differentiation in the germline stem cell (GSC) lineage by repressing microRNA-7 (miR-7), thereby acting as an indirect regulator of bag-of-marbles (Bam). Acts by binding to the promoter of miR-7 gene and repressing its expression; miR-7 repression alleviates the Bam repression by miR-7, thereby allowing differentiation in the germline stem cell (GSC) lineage. This is Protein maelstrom 1 (mael1) from Drosophila pseudoobscura pseudoobscura (Fruit fly).